The sequence spans 116 residues: NADH-ubiquinone oxidoreductase chain 3 (116 aa).

The next 3 helical transmembrane spans lie at 3-23 (LILAGLLIMSILSMILAMIAF), 56-76 (FFLVAILFLLFDLEIALLLPL), and 85-105 (PTLALTWTTSIIALLTLGLIH).

It belongs to the complex I subunit 3 family.

The protein resides in the mitochondrion membrane. The catalysed reaction is a ubiquinone + NADH + 5 H(+)(in) = a ubiquinol + NAD(+) + 4 H(+)(out). Functionally, core subunit of the mitochondrial membrane respiratory chain NADH dehydrogenase (Complex I) that is believed to belong to the minimal assembly required for catalysis. Complex I functions in the transfer of electrons from NADH to the respiratory chain. The immediate electron acceptor for the enzyme is believed to be ubiquinone. The protein is NADH-ubiquinone oxidoreductase chain 3 (MT-ND3) of Latimeria chalumnae (Coelacanth).